Reading from the N-terminus, the 122-residue chain is Small ribosomal subunit protein uS13 (122 aa).

The interval 96–122 (LPCRGQRTHTNARTRKGPRKPIAGKKK) is disordered.

Belongs to the universal ribosomal protein uS13 family. Part of the 30S ribosomal subunit. Forms a loose heterodimer with protein S19. Forms two bridges to the 50S subunit in the 70S ribosome.

Its function is as follows. Located at the top of the head of the 30S subunit, it contacts several helices of the 16S rRNA. In the 70S ribosome it contacts the 23S rRNA (bridge B1a) and protein L5 of the 50S subunit (bridge B1b), connecting the 2 subunits; these bridges are implicated in subunit movement. Contacts the tRNAs in the A and P-sites. The chain is Small ribosomal subunit protein uS13 from Magnetococcus marinus (strain ATCC BAA-1437 / JCM 17883 / MC-1).